Here is a 432-residue protein sequence, read N- to C-terminus: Malate dehydrogenase [NADP], chloroplastic (432 aa).

A chloroplast-targeting transit peptide spans 1–40 (MGLSTVYSPAGPRLVPAPLGRCRSAQPRRPRRAPLATVRC). The tract at residues 18–37 (PLGRCRSAQPRRPRRAPLAT) is disordered. A disulfide bond links Cys67 and Cys72. 96 to 102 (GAAGMIS) contacts NADP(+). Residues Arg177 and Arg183 each coordinate substrate. Residue Asn190 participates in NADP(+) binding. Gln197 contacts NAD(+). NADP(+) is bound at residue 214–216 (VGN). The substrate site is built by Asn216 and Arg247. Catalysis depends on His272, which acts as the Proton acceptor. A disulfide bridge connects residues Cys408 and Cys420.

Belongs to the LDH/MDH superfamily. MDH type 2 family. In terms of assembly, homodimer.

It is found in the plastid. The protein localises to the chloroplast. The catalysed reaction is (S)-malate + NADP(+) = oxaloacetate + NADPH + H(+). With respect to regulation, chloroplast NADP-MDH is activated upon illumination. In order to be enzymatically active, disulfide bridges on the protein must be reduced by thioredoxin which receives electrons from ferredoxin and the electron transport system of photosynthesis. In terms of biological role, the chloroplastic, NADP-dependent form is essential for the photosynthesis C4 cycle, which allows plants to circumvent the problem of photorespiration. In C4 plants, NADP-MDH activity acts to convert oxaloacetate to malate in chloroplasts of mesophyll cells for transport to the bundle sheath cells. This is Malate dehydrogenase [NADP], chloroplastic from Zea mays (Maize).